The following is a 141-amino-acid chain: Hemoglobin subunit alpha (141 aa).

Residues 1 to 141 enclose the Globin domain; that stretch reads VLSPADKANI…VSTVLTSKYR (141 aa). Position 3 is a phosphoserine (S3). Residues K7 and K11 each carry the N6-succinyllysine modification. Residue K16 is modified to N6-acetyllysine; alternate. An N6-succinyllysine; alternate modification is found at K16. Y24 bears the Phosphotyrosine mark. The residue at position 35 (S35) is a Phosphoserine. At K40 the chain carries N6-succinyllysine. S49 is modified (phosphoserine). An O2-binding site is contributed by H58. H87 lines the heme b pocket. S102 carries the post-translational modification Phosphoserine. T108 is modified (phosphothreonine). Residues S124 and S131 each carry the phosphoserine modification. Phosphothreonine occurs at positions 134 and 137. The residue at position 138 (S138) is a Phosphoserine.

Belongs to the globin family. Heterotetramer of two alpha chains and two beta chains. In terms of tissue distribution, red blood cells.

Involved in oxygen transport from the lung to the various peripheral tissues. In terms of biological role, hemopressin acts as an antagonist peptide of the cannabinoid receptor CNR1. Hemopressin-binding efficiently blocks cannabinoid receptor CNR1 and subsequent signaling. The protein is Hemoglobin subunit alpha (HBA) of Meles meles (Eurasian badger).